Consider the following 101-residue polypeptide: Small ribosomal subunit protein uS14 (101 aa).

The interval 1-24 (MAKVSSIKKNEKRKKLSQSLHNKR) is disordered. Over residues 10-24 (NEKRKKLSQSLHNKR) the composition is skewed to basic residues.

This sequence belongs to the universal ribosomal protein uS14 family. As to quaternary structure, part of the 30S ribosomal subunit. Contacts proteins S3 and S10.

Binds 16S rRNA, required for the assembly of 30S particles and may also be responsible for determining the conformation of the 16S rRNA at the A site. The sequence is that of Small ribosomal subunit protein uS14 from Rickettsia bellii (strain OSU 85-389).